Consider the following 378-residue polypeptide: uncharacterized protein (378 aa).

Transmembrane regions (helical) follow at residues 7 to 29, 33 to 55, 68 to 85, 90 to 108, 115 to 137, 152 to 174, 204 to 225, 245 to 267, 280 to 302, and 347 to 366; these read VTPF…RLSQ, LFFV…YQII, VSYL…EFYT, SGSL…HLLL, PLTV…FLYL, LTVG…MLIM, NYKL…FLYL, IFLF…ASHA, LILY…PRIV, and FSPL…ALFL.

The protein resides in the cell membrane. This is an uncharacterized protein from Aquifex aeolicus (strain VF5).